The following is a 200-amino-acid chain: Holliday junction branch migration complex subunit RuvA (200 aa).

A domain I region spans residues 1–64 (MYAYFRGRLV…EDALQLYGFA (64 aa)). Positions 65–143 (TEEEKQLFRL…KLAPVGSAVA (79 aa)) are domain II. The flexible linker stretch occupies residues 144–154 (SVAADRGGFRE). The tract at residues 154–200 (EDAVNALMTLGFPRPVANQAVGCALEPEPDASLEVVIKRALATMHNR) is domain III.

It belongs to the RuvA family. As to quaternary structure, homotetramer. Forms an RuvA(8)-RuvB(12)-Holliday junction (HJ) complex. HJ DNA is sandwiched between 2 RuvA tetramers; dsDNA enters through RuvA and exits via RuvB. An RuvB hexamer assembles on each DNA strand where it exits the tetramer. Each RuvB hexamer is contacted by two RuvA subunits (via domain III) on 2 adjacent RuvB subunits; this complex drives branch migration. In the full resolvosome a probable DNA-RuvA(4)-RuvB(12)-RuvC(2) complex forms which resolves the HJ.

The protein localises to the cytoplasm. Functionally, the RuvA-RuvB-RuvC complex processes Holliday junction (HJ) DNA during genetic recombination and DNA repair, while the RuvA-RuvB complex plays an important role in the rescue of blocked DNA replication forks via replication fork reversal (RFR). RuvA specifically binds to HJ cruciform DNA, conferring on it an open structure. The RuvB hexamer acts as an ATP-dependent pump, pulling dsDNA into and through the RuvAB complex. HJ branch migration allows RuvC to scan DNA until it finds its consensus sequence, where it cleaves and resolves the cruciform DNA. The sequence is that of Holliday junction branch migration complex subunit RuvA from Chlorobium phaeovibrioides (strain DSM 265 / 1930) (Prosthecochloris vibrioformis (strain DSM 265)).